Consider the following 163-residue polypeptide: Neurotrophin-3 (163 aa).

The signal sequence occupies residues I1–S3. Positions S4–R119 are excised as a propeptide. A disordered region spans residues Q36 to Q61. The segment covering K49–Q61 has biased composition (basic and acidic residues). A glycan (N-linked (GlcNAc...) asparagine) is linked at N112.

This sequence belongs to the NGF-beta family.

It localises to the secreted. Seems to promote the survival of visceral and proprioceptive sensory neurons. This Boa constrictor (Boa) protein is Neurotrophin-3 (NTF3).